The chain runs to 837 residues: Tuftelin-interacting protein 11 (837 aa).

Basic and acidic residues-rich tracts occupy residues 1 to 13 (MSLS…GEGR) and 53 to 64 (VWAERDSDDERP). Disordered regions lie at residues 1 to 21 (MSLS…DDER), 53 to 72 (VWAE…KRAR), and 85 to 133 (LKKG…KGFA). Residues 1–50 (MSLSHLYRDGEGRIDDDDDERENFEITDWDLQNEFNPNRQRHWQTKEEAT) are required for interaction with DHX15. Phosphoserine is present on residues S2, S59, and S98. A compositionally biased stretch (acidic residues) spans 91 to 102 (EEAELEDSDDEE). Basic and acidic residues predominate over residues 103 to 116 (KPVKQDDFPKDFGP). S144 is modified (phosphoserine). The 47-residue stretch at 149–195 (TKGIGQKLLQKMGYVPGRGLGKNAQGIINPIEAKQRKGKGAVGAYGS) folds into the G-patch domain. A disordered region spans residues 179 to 236 (IEAKQRKGKGAVGAYGSERTTQSMQDFPVVDSEEEAEEEFQKELSQWRKDPSGSKKKP). The residue at position 210 (S210) is a Phosphoserine. The segment covering 217–231 (EFQKELSQWRKDPSG) has biased composition (basic and acidic residues). Residues 700–705 (VKDKFN) carry the Nuclear localization signal motif. The interval 710 to 734 (IMNRAVSSNVGAYMQPGARENIAYL) is required for nuclear speckle localization.

This sequence belongs to the TFP11/STIP family. Identified in the spliceosome C complex. Found in the Intron Large (IL) complex, a post-mRNA release spliceosomal complex containing the excised intron, U2, U5 and U6 snRNPs, and splicing factors. Interacts with TUFT1. Interacts with DHX15; indicative for a recruitment of DHX15 to the IL complex. Interacts with GCFC2.

It is found in the cytoplasm. The protein resides in the nucleus. Involved in pre-mRNA splicing, specifically in spliceosome disassembly during late-stage splicing events. Intron turnover seems to proceed through reactions in two lariat-intron associated complexes termed Intron Large (IL) and Intron Small (IS). In cooperation with DHX15 seems to mediate the transition of the U2, U5 and U6 snRNP-containing IL complex to the snRNP-free IS complex leading to efficient debranching and turnover of excised introns. May play a role in the differentiation of ameloblasts and odontoblasts or in the forming of the enamel extracellular matrix. The sequence is that of Tuftelin-interacting protein 11 (TFIP11) from Homo sapiens (Human).